A 221-amino-acid chain; its full sequence is Glutathione S-transferase alpha-3 (221 aa).

Residues 3-83 (GKPVLHYFDG…YIATKYNLYG (81 aa)) enclose the GST N-terminal domain. Lys-4 carries the post-translational modification N6-succinyllysine. Residues Tyr-9, Arg-45, 54–55 (QV), and 67–68 (QT) contribute to the glutathione site. One can recognise a GST C-terminal domain in the interval 85–207 (DMKERALIDM…LQPGSQRKPL (123 aa)).

Belongs to the GST superfamily. Alpha family. In terms of assembly, heterodimer of YC1 and YC2.

It is found in the cytoplasm. It catalyses the reaction RX + glutathione = an S-substituted glutathione + a halide anion + H(+). The enzyme catalyses androst-5-ene-3,17-dione = androst-4-ene-3,17-dione. It carries out the reaction pregn-5-ene-3,20-dione = progesterone. Conjugation of reduced glutathione to a wide number of exogenous and endogenous hydrophobic electrophiles. Catalyzes isomerization reactions that contribute to the biosynthesis of steroid hormones. Efficiently catalyze obligatory double-bond isomerizations of delta(5)-androstene-3,17-dione and delta(5)-pregnene-3,20-dione, precursors to testosterone and progesterone, respectively. Has substantial activity toward aflatoxin B1-8,9-epoxide. This Rattus norvegicus (Rat) protein is Glutathione S-transferase alpha-3.